Reading from the N-terminus, the 955-residue chain is Mediator of RNA polymerase II transcription subunit 16 (955 aa).

The interval 855-874 (ALPETNANANANQNGKSSTQ) is disordered. The span at 857 to 873 (PETNANANANQNGKSST) shows a compositional bias: polar residues.

This sequence belongs to the Mediator complex subunit 16 family. Component of the Mediator complex.

The protein resides in the nucleus. Functionally, component of the Mediator complex, a coactivator involved in the regulated transcription of nearly all RNA polymerase II-dependent genes. Mediator functions as a bridge to convey information from gene-specific regulatory proteins to the basal RNA polymerase II transcription machinery. Mediator is recruited to promoters by direct interactions with regulatory proteins and serves as a scaffold for the assembly of a functional preinitiation complex with RNA polymerase II and the general transcription factors. This chain is Mediator of RNA polymerase II transcription subunit 16 (sin4), found in Aspergillus fumigatus (strain ATCC MYA-4609 / CBS 101355 / FGSC A1100 / Af293) (Neosartorya fumigata).